Here is a 355-residue protein sequence, read N- to C-terminus: Uroporphyrinogen decarboxylase (355 aa).

Residues 27 to 31 (RQAGR), Asp77, Tyr154, Thr209, and His327 contribute to the substrate site.

The protein belongs to the uroporphyrinogen decarboxylase family. As to quaternary structure, homodimer.

The protein localises to the cytoplasm. It carries out the reaction uroporphyrinogen III + 4 H(+) = coproporphyrinogen III + 4 CO2. The protein operates within porphyrin-containing compound metabolism; protoporphyrin-IX biosynthesis; coproporphyrinogen-III from 5-aminolevulinate: step 4/4. In terms of biological role, catalyzes the decarboxylation of four acetate groups of uroporphyrinogen-III to yield coproporphyrinogen-III. The protein is Uroporphyrinogen decarboxylase of Aeromonas salmonicida (strain A449).